Consider the following 257-residue polypeptide: 1-(5-phosphoribosyl)-5-[(5-phosphoribosylamino)methylideneamino] imidazole-4-carboxamide isomerase (257 aa).

Asp-8 acts as the Proton acceptor in catalysis. Catalysis depends on Asp-129, which acts as the Proton donor.

This sequence belongs to the HisA/HisF family.

It localises to the cytoplasm. The catalysed reaction is 1-(5-phospho-beta-D-ribosyl)-5-[(5-phospho-beta-D-ribosylamino)methylideneamino]imidazole-4-carboxamide = 5-[(5-phospho-1-deoxy-D-ribulos-1-ylimino)methylamino]-1-(5-phospho-beta-D-ribosyl)imidazole-4-carboxamide. Its pathway is amino-acid biosynthesis; L-histidine biosynthesis; L-histidine from 5-phospho-alpha-D-ribose 1-diphosphate: step 4/9. The polypeptide is 1-(5-phosphoribosyl)-5-[(5-phosphoribosylamino)methylideneamino] imidazole-4-carboxamide isomerase (Acaryochloris marina (strain MBIC 11017)).